We begin with the raw amino-acid sequence, 509 residues long: Cytochrome P450 monooxygenase fumoA (509 aa).

Residues 5-27 form a helical membrane-spanning segment; it reads LANLNFPYLILSACLSAILLSRF. N-linked (GlcNAc...) asparagine glycans are attached at residues asparagine 317, asparagine 369, and asparagine 378. Cysteine 456 serves as a coordination point for heme. An N-linked (GlcNAc...) asparagine glycan is attached at asparagine 464.

Belongs to the cytochrome P450 family. It depends on heme as a cofactor.

The protein localises to the membrane. The protein operates within secondary metabolite biosynthesis. In terms of biological role, cytochrome P450 monooxygenase; part of the gene cluster that mediates the biosynthesis of fumosorinone, a 2-pyridone alkaloid that acts as an inhibitor of protein tyrosine phosphatase 1B which is implicated asa negative regulator of insulin receptor signaling and a potential drug target for the treatment of type II diabetes and other associated metabolic syndromes. The polyketide-amino acid backbone of fumosorinone is first assembled by the PKS-NRPS hybrid fumoS. The PKS modules condense one acetyl-CoA starter unit with 7 malonyl-CoA units, programmed C-methylations occurring after the first 3 and the sixth extensions, and cycles of full reduction occurring after the first 2 extensions. Because fumoS lacks a designated enoyl reductase (ER) domain, the required activity is provided the enoyl reductase fumoC. Upon formation of the polyketide backbone on the thiotemplate, the polyketide is transferred to the NRPS module and linked to tyrosine to produce the acyltetramic acid intermediate called prefumosorinone A. The cytochrome P450 monooxygenase fumoA then probably catalyzes an unprecedented oxidative ring expansion of prefumosorinone A to form prefumosorinone B which contains the 2-pyridone core of fumosorinone. The cytochrome P450 monooxygenase fumoB might hydroxylate the nitrogen of prefumosorinone B, but not the acyltetramic acid prefumosorinone A, to form fumosorinone. The polypeptide is Cytochrome P450 monooxygenase fumoA (Cordyceps fumosorosea (strain ARSEF 2679) (Isaria fumosorosea)).